A 302-amino-acid chain; its full sequence is MQQLLNEILDEVRPLIGRGKVADYIPALAGVEPNQLGIAVYSRDGELFHAGDALRPFSIQSISKVFSLVQAIQHSGEDIWQRLGHEPSGQPFNSLVQLEFERGKPRNPFINAGALVICDINQSRFAAPAQSMRDFVRRLCGNPEVVSDSVVARSEYQHRSRNAAAAYLMKSFGNFHNDVEAVLLSYFHHCALRMSCVDLARAFCFLADKGFCKHSGEQVLNERQTKQVNAIMATSGLYDEAGNFAYRVGLPGKSGVGGGIIAVVPGRFTVCVWSPELNAAGNSLAGIAALEKLSERIGWSIF.

Residues Ser-61, Asn-111, Glu-155, Asn-162, Tyr-186, Tyr-238, and Val-256 each contribute to the substrate site.

Belongs to the glutaminase family. In terms of assembly, homotetramer.

The enzyme catalyses L-glutamine + H2O = L-glutamate + NH4(+). The protein is Glutaminase of Pseudomonas aeruginosa (strain LESB58).